Reading from the N-terminus, the 381-residue chain is Creatine kinase M-type (381 aa).

Positions 11 to 98 (KLKFSAEEEF…FDPVIQDRHG (88 aa)) constitute a Phosphagen kinase N-terminal domain. The disordered stretch occupies residues 99-118 (GYKPTDKHRTDLNHENLKGG). A Phosphagen kinase C-terminal domain is found at 125–367 (YVLSSRVRTG…KLMVEMEKKL (243 aa)). Residues 128-132 (SSRVR), His191, Arg236, Arg292, 320-325 (RGTGGV), and Asp335 contribute to the ATP site.

It belongs to the ATP:guanido phosphotransferase family. As to quaternary structure, dimer of identical or non-identical chains, which can be either B (brain type) or M (muscle type). With MM being the major form in skeletal muscle and myocardium, MB existing in myocardium, and BB existing in many tissues, especially brain. Predominantly found in skeletal muscle, but not in the heart.

The protein resides in the cytoplasm. The enzyme catalyses creatine + ATP = N-phosphocreatine + ADP + H(+). Reversibly catalyzes the transfer of phosphate between ATP and various phosphogens (e.g. creatine phosphate). Creatine kinase isoenzymes play a central role in energy transduction in tissues with large, fluctuating energy demands, such as skeletal muscle, heart, brain and spermatozoa. This is Creatine kinase M-type from Gallus gallus (Chicken).